The chain runs to 205 residues: Alpha-1-acid glycoprotein (205 aa).

The signal sequence occupies residues 1-18 (MALHMVLVVLSLLPLLEA). Residues Asn25, Asn34, Asn76, Asn94, Asn104, and Asn134 are each glycosylated (N-linked (GlcNAc...) asparagine). A disulfide bridge links Cys91 with Cys183.

It belongs to the calycin superfamily. Lipocalin family.

The protein localises to the secreted. Its function is as follows. Functions as a transport protein in the blood stream. Binds various ligands in the interior of its beta-barrel domain. Appears to function in modulating the activity of the immune system during the acute-phase reaction. This chain is Alpha-1-acid glycoprotein (Orm1), found in Rattus norvegicus (Rat).